A 290-amino-acid chain; its full sequence is Nitrogenase iron protein 2 (290 aa).

10–17 lines the ATP pocket; it reads GKGGIGKS. [4Fe-4S] cluster is bound at residue cysteine 98. Arginine 101 carries the post-translational modification ADP-ribosylarginine; by dinitrogenase reductase ADP-ribosyltransferase. Residue cysteine 133 coordinates [4Fe-4S] cluster.

It belongs to the NifH/BchL/ChlL family. As to quaternary structure, homodimer. It depends on [4Fe-4S] cluster as a cofactor. Post-translationally, the reversible ADP-ribosylation of Arg-101 inactivates the nitrogenase reductase and regulates nitrogenase activity.

It catalyses the reaction N2 + 8 reduced [2Fe-2S]-[ferredoxin] + 16 ATP + 16 H2O = H2 + 8 oxidized [2Fe-2S]-[ferredoxin] + 2 NH4(+) + 16 ADP + 16 phosphate + 6 H(+). Its function is as follows. The key enzymatic reactions in nitrogen fixation are catalyzed by the nitrogenase complex, which has 2 components: the iron protein (component 2) and a component 1 which is either a molybdenum-iron protein, a vanadium-iron, or an iron-iron protein. In Azotobacter vinelandii, this protein is Nitrogenase iron protein 2 (vnfH).